The following is a 407-amino-acid chain: Biotin synthase (407 aa).

The region spanning 47 to 277 (WFGRRVKLNY…DVEVRIAGGR (231 aa)) is the Radical SAM core domain. [4Fe-4S] cluster is bound by residues C65, C69, and C72. [2Fe-2S] cluster is bound by residues C109, C142, C202, and R272. A disordered region spans residues 368 to 407 (GGGVCAPAPAATTPRPAEEPRTDLVAVRRRGAGTDLAPNA). A compositionally biased stretch (low complexity) spans 373–382 (APAPAATTPR).

The protein belongs to the radical SAM superfamily. Biotin synthase family. In terms of assembly, homodimer. The cofactor is [4Fe-4S] cluster. It depends on [2Fe-2S] cluster as a cofactor.

The catalysed reaction is (4R,5S)-dethiobiotin + (sulfur carrier)-SH + 2 reduced [2Fe-2S]-[ferredoxin] + 2 S-adenosyl-L-methionine = (sulfur carrier)-H + biotin + 2 5'-deoxyadenosine + 2 L-methionine + 2 oxidized [2Fe-2S]-[ferredoxin]. It functions in the pathway cofactor biosynthesis; biotin biosynthesis; biotin from 7,8-diaminononanoate: step 2/2. Functionally, catalyzes the conversion of dethiobiotin (DTB) to biotin by the insertion of a sulfur atom into dethiobiotin via a radical-based mechanism. The sequence is that of Biotin synthase from Streptomyces coelicolor (strain ATCC BAA-471 / A3(2) / M145).